We begin with the raw amino-acid sequence, 255 residues long: Sugar fermentation stimulation protein homolog (255 aa).

The protein belongs to the SfsA family.

This Synechococcus sp. (strain WH7803) protein is Sugar fermentation stimulation protein homolog.